We begin with the raw amino-acid sequence, 367 residues long: Queuine tRNA-ribosyltransferase (367 aa).

Asp-92 (proton acceptor) is an active-site residue. Residues 92–96 (DSGGF), Asp-146, Gln-188, and Gly-215 contribute to the substrate site. The interval 246-252 (GVGTPKD) is RNA binding. The Nucleophile role is filled by Asp-265. Residues Cys-303, Cys-305, Cys-308, and His-334 each coordinate Zn(2+).

The protein belongs to the queuine tRNA-ribosyltransferase family. Homodimer. Within each dimer, one monomer is responsible for RNA recognition and catalysis, while the other monomer binds to the replacement base PreQ1. Zn(2+) serves as cofactor.

The enzyme catalyses 7-aminomethyl-7-carbaguanine + guanosine(34) in tRNA = 7-aminomethyl-7-carbaguanosine(34) in tRNA + guanine. It functions in the pathway tRNA modification; tRNA-queuosine biosynthesis. In terms of biological role, catalyzes the base-exchange of a guanine (G) residue with the queuine precursor 7-aminomethyl-7-deazaguanine (PreQ1) at position 34 (anticodon wobble position) in tRNAs with GU(N) anticodons (tRNA-Asp, -Asn, -His and -Tyr). Catalysis occurs through a double-displacement mechanism. The nucleophile active site attacks the C1' of nucleotide 34 to detach the guanine base from the RNA, forming a covalent enzyme-RNA intermediate. The proton acceptor active site deprotonates the incoming PreQ1, allowing a nucleophilic attack on the C1' of the ribose to form the product. After dissociation, two additional enzymatic reactions on the tRNA convert PreQ1 to queuine (Q), resulting in the hypermodified nucleoside queuosine (7-(((4,5-cis-dihydroxy-2-cyclopenten-1-yl)amino)methyl)-7-deazaguanosine). This is Queuine tRNA-ribosyltransferase from Francisella tularensis subsp. tularensis (strain FSC 198).